The following is a 443-amino-acid chain: ATP-dependent protease ATPase subunit HslU (443 aa).

ATP contacts are provided by residues isoleucine 18, glycine 60–glutamate 65, aspartate 256, glutamate 321, and arginine 393.

Belongs to the ClpX chaperone family. HslU subfamily. In terms of assembly, a double ring-shaped homohexamer of HslV is capped on each side by a ring-shaped HslU homohexamer. The assembly of the HslU/HslV complex is dependent on binding of ATP.

Its subcellular location is the cytoplasm. In terms of biological role, ATPase subunit of a proteasome-like degradation complex; this subunit has chaperone activity. The binding of ATP and its subsequent hydrolysis by HslU are essential for unfolding of protein substrates subsequently hydrolyzed by HslV. HslU recognizes the N-terminal part of its protein substrates and unfolds these before they are guided to HslV for hydrolysis. In Nitrosospira multiformis (strain ATCC 25196 / NCIMB 11849 / C 71), this protein is ATP-dependent protease ATPase subunit HslU.